The primary structure comprises 301 residues: uncharacterized protein (301 aa).

Threonine 47 functions as the Charge relay system in the catalytic mechanism. The Proton donor role is filled by tyrosine 136. Lysine 165 functions as the Schiff-base intermediate with substrate in the catalytic mechanism.

It belongs to the DapA family. As to quaternary structure, homotetramer.

It is found in the cytoplasm. This is an uncharacterized protein from Thermofilum pendens (strain DSM 2475 / Hrk 5).